The following is a 690-amino-acid chain: UvrABC system protein C (690 aa).

The tract at residues 1 to 60 (MTTDSSDPAKPAGPGQPPGSGADTRPGGLATGQDVDPATIETDEDDEARLPDVPDEPTDA) is disordered. Residues 41–58 (ETDEDDEARLPDVPDEPT) show a composition bias toward acidic residues. Residues 82-160 (TSPGVYRMMN…IKQLRPRFNV (79 aa)) enclose the GIY-YIG domain. The UVR domain occupies 270 to 305 (RAVKEELAREMEKASGDLAFERAALYRDRLAALSAI).

Belongs to the UvrC family. As to quaternary structure, interacts with UvrB in an incision complex.

It is found in the cytoplasm. The UvrABC repair system catalyzes the recognition and processing of DNA lesions. UvrC both incises the 5' and 3' sides of the lesion. The N-terminal half is responsible for the 3' incision and the C-terminal half is responsible for the 5' incision. The sequence is that of UvrABC system protein C from Nitrobacter hamburgensis (strain DSM 10229 / NCIMB 13809 / X14).